The chain runs to 485 residues: Trigger factor (485 aa).

Residues 169–261 (GDVAIVDFVG…LKELKEKELP (93 aa)) enclose the PPIase FKBP-type domain.

Belongs to the FKBP-type PPIase family. Tig subfamily.

It localises to the cytoplasm. The enzyme catalyses [protein]-peptidylproline (omega=180) = [protein]-peptidylproline (omega=0). Functionally, involved in protein export. Acts as a chaperone by maintaining the newly synthesized protein in an open conformation. Functions as a peptidyl-prolyl cis-trans isomerase. The polypeptide is Trigger factor (Trichodesmium erythraeum (strain IMS101)).